Consider the following 360-residue polypeptide: MKSSIVAKLEALQERHEEVLAHLGDANVIADQDRFRALSREYAQLTDVTRCFKEWRSVQDDIEAAEMMLDDPEMREMAQDELKEAKARSEELEQQLQVLLLPKDPDDERDCFLEIRAGTGGDEAAIFAGDMFRMYSRYAEARRWKVEIMSASEGEHGGYKEVIAKVSGDGVFGQLKFESGGHRVQRVPETESQGRIHTSACTVAVMPAIPEAEMPEINAGDLRIDTFRSSGAGGQHVNTTDSAIRITHIPTGIVVECQDERSQHKNKAKAMSVLGARIRAAEMQKRQQAEASERRNLLGSGDRSDRNRTYNFPQGRVTDHRINLTLYRLDEVMEGKLDMLIQPIVQEYQADQLSALSEQD.

Glutamine 235 carries the N5-methylglutamine modification. Basic and acidic residues predominate over residues methionine 283–arginine 308. The segment at methionine 283–proline 313 is disordered.

Belongs to the prokaryotic/mitochondrial release factor family. In terms of processing, methylated by PrmC. Methylation increases the termination efficiency of RF1.

It localises to the cytoplasm. Peptide chain release factor 1 directs the termination of translation in response to the peptide chain termination codons UAG and UAA. The sequence is that of Peptide chain release factor 1 from Yersinia enterocolitica serotype O:8 / biotype 1B (strain NCTC 13174 / 8081).